Here is a 184-residue protein sequence, read N- to C-terminus: ATP synthase subunit b 1 (184 aa).

The chain crosses the membrane as a helical span at residues 4–24 (LSILAVLAASPAMAATGPFLS).

It belongs to the ATPase B chain family. In terms of assembly, F-type ATPases have 2 components, F(1) - the catalytic core - and F(0) - the membrane proton channel. F(1) has five subunits: alpha(3), beta(3), gamma(1), delta(1), epsilon(1). F(0) has three main subunits: a(1), b(2) and c(10-14). The alpha and beta chains form an alternating ring which encloses part of the gamma chain. F(1) is attached to F(0) by a central stalk formed by the gamma and epsilon chains, while a peripheral stalk is formed by the delta and b chains.

The protein localises to the cell inner membrane. In terms of biological role, f(1)F(0) ATP synthase produces ATP from ADP in the presence of a proton or sodium gradient. F-type ATPases consist of two structural domains, F(1) containing the extramembraneous catalytic core and F(0) containing the membrane proton channel, linked together by a central stalk and a peripheral stalk. During catalysis, ATP synthesis in the catalytic domain of F(1) is coupled via a rotary mechanism of the central stalk subunits to proton translocation. Functionally, component of the F(0) channel, it forms part of the peripheral stalk, linking F(1) to F(0). The chain is ATP synthase subunit b 1 from Cereibacter sphaeroides (strain ATCC 17029 / ATH 2.4.9) (Rhodobacter sphaeroides).